The chain runs to 499 residues: Low-affinity inorganic phosphate transporter PitA (499 aa).

Residues Met-1–Leu-4 are Periplasmic-facing. Residues Phe-5–Phe-25 form a helical membrane-spanning segment. Residues Tyr-26–Gln-51 lie on the Cytoplasmic side of the membrane. The helical transmembrane segment at Leu-52–Val-72 threads the bilayer. Over Ala-73–Gly-93 the chain is Periplasmic. Residues Leu-94–Phe-114 form a helical membrane-spanning segment. The Cytoplasmic portion of the chain corresponds to Gly-115–Thr-123. Residues Leu-124–Val-144 form a helical membrane-spanning segment. At Asp-145–Ser-154 the chain is on the periplasmic side. Residues Ile-155–Phe-175 traverse the membrane as a helical segment. At Leu-176 to Pro-206 the chain is on the cytoplasmic side. The helical transmembrane segment at Pro-207 to Ala-227 threads the bilayer. Topologically, residues Asn-228–Lys-232 are periplasmic. The helical transmembrane segment at Gly-233–Met-253 threads the bilayer. The Cytoplasmic segment spans residues Asn-254 to Tyr-381. A helical membrane pass occupies residues Ala-382–Trp-402. Topologically, residues Arg-403 to Thr-429 are periplasmic. A helical membrane pass occupies residues Ala-430–Leu-450. Residues Ser-451–Ser-472 are Cytoplasmic-facing. Residues Ile-473–Trp-493 traverse the membrane as a helical segment. At Leu-494 to Leu-499 the chain is on the periplasmic side.

It belongs to the inorganic phosphate transporter (PiT) (TC 2.A.20) family. Pit subfamily.

The protein resides in the cell inner membrane. The catalysed reaction is phosphate(in) + H(+)(in) = phosphate(out) + H(+)(out). Low-affinity inorganic phosphate transporter. The polypeptide is Low-affinity inorganic phosphate transporter PitA (pitA) (Escherichia coli O157:H7).